Reading from the N-terminus, the 82-residue chain is Small ribosomal subunit protein uS17 (82 aa).

The protein belongs to the universal ribosomal protein uS17 family. In terms of assembly, part of the 30S ribosomal subunit.

In terms of biological role, one of the primary rRNA binding proteins, it binds specifically to the 5'-end of 16S ribosomal RNA. This chain is Small ribosomal subunit protein uS17, found in Bradyrhizobium diazoefficiens (strain JCM 10833 / BCRC 13528 / IAM 13628 / NBRC 14792 / USDA 110).